Here is a 1325-residue protein sequence, read N- to C-terminus: Clustered mitochondria protein homolog (1325 aa).

A Clu domain is found at 311–573 (PKHESDPMRT…RHTPMDVTWL (263 aa)). 3 disordered regions span residues 893–937 (KHAE…PLRT), 1032–1063 (DSNQ…DDQL), and 1245–1325 (QHAR…AKRS). A compositionally biased stretch (basic residues) spans 1265–1275 (SAHHHHHRHLH). Low complexity predominate over residues 1276–1285 (QQQQNSSSSP). Residues 1314–1325 (AARKRAARAKRS) show a composition bias toward basic residues.

The protein belongs to the CLU family. May associate with the eukaryotic translation initiation factor 3 (eIF-3) complex.

The protein localises to the cytoplasm. Its function is as follows. mRNA-binding protein involved in proper cytoplasmic distribution of mitochondria. The sequence is that of Clustered mitochondria protein homolog from Malassezia globosa (strain ATCC MYA-4612 / CBS 7966) (Dandruff-associated fungus).